The chain runs to 112 residues: Photosystem II reaction center Psb28 protein (112 aa).

It belongs to the Psb28 family. Part of the photosystem II complex.

The protein resides in the plastid. It is found in the cyanelle thylakoid membrane. The chain is Photosystem II reaction center Psb28 protein from Cyanophora paradoxa.